We begin with the raw amino-acid sequence, 648 residues long: Forkhead box protein N1 (648 aa).

Residues 1-95 form a disordered region; sequence MVSLLPPQSD…PGPGSFRLSP (95 aa). The segment covering 38-50 has biased composition (polar residues); sequence APQNKHANFSCSS. Residues 54 to 67 show a composition bias toward pro residues; that stretch reads DGPPERTPSLPPHS. Positions 271–367 form a DNA-binding region, fork-head; the sequence is KPIYSYSILI…EELQKWKRKD (97 aa). Disordered stretches follow at residues 392–432, 457–521, and 629–648; these read LGSP…APGP, HLSP…TLLP, and SAAA…LALA. A compositionally biased stretch (pro residues) spans 398 to 412; it reads GCPPPGLAGPGPIRP.

In terms of tissue distribution, bone marrow (at protein level). Expressed in thymus and skin.

The protein resides in the nucleus. Transcriptional regulator which regulates the development, differentiation, and function of thymic epithelial cells (TECs) both in the prenatal and postnatal thymus. Acts as a master regulator of the TECs lineage development and is required from the onset of differentiation in progenitor TECs in the developing fetus to the final differentiation steps through which TECs mature to acquire their full functionality. Regulates, either directly or indirectly the expression of a variety of genes that mediate diverse aspects of thymus development and function, including MHC Class II, DLL4, CCL25, CTSL, CD40 and PAX1. Regulates the differentiation of the immature TECs into functional cortical TECs (cTECs) and medullary TECs (mTECs). Essential for maintenance of mTECs population in the postnatal thymus. Involved in the morphogenesis and maintenance of the three-dimensional thymic microstructure which is necessary for a fully functional thymus. Plays an important role in the maintenance of hematopoiesis and particularly T lineage progenitors within the bone marrow niche with age. Essential for the vascularization of the thymus anlage. Promotes the terminal differentiation of epithelial cells in the epidermis and hair follicles, partly by negatively regulating the activity of protein kinase C. The chain is Forkhead box protein N1 (Foxn1) from Mus musculus (Mouse).